The sequence spans 179 residues: Large ribosomal subunit protein uL5 (179 aa).

The protein belongs to the universal ribosomal protein uL5 family. As to quaternary structure, part of the 50S ribosomal subunit; part of the 5S rRNA/L5/L18/L25 subcomplex. Contacts the 5S rRNA and the P site tRNA. Forms a bridge to the 30S subunit in the 70S ribosome.

Functionally, this is one of the proteins that bind and probably mediate the attachment of the 5S RNA into the large ribosomal subunit, where it forms part of the central protuberance. In the 70S ribosome it contacts protein S13 of the 30S subunit (bridge B1b), connecting the 2 subunits; this bridge is implicated in subunit movement. Contacts the P site tRNA; the 5S rRNA and some of its associated proteins might help stabilize positioning of ribosome-bound tRNAs. This chain is Large ribosomal subunit protein uL5, found in Polaromonas naphthalenivorans (strain CJ2).